The chain runs to 309 residues: GTPase Era (309 aa).

Residues 16–186 (HAGFVAIVGK…REQILDALPE (171 aa)) enclose the Era-type G domain. Residues 24–31 (GKPNVGKS) form a G1 region. Residue 24-31 (GKPNVGKS) coordinates GTP. The G2 stretch occupies residues 50–54 (QTTRR). Residues 71–74 (DTPG) are G3. Residues 71–75 (DTPGL) and 133–136 (NKVD) each bind GTP. The segment at 133–136 (NKVD) is G4. Positions 164 to 166 (LSA) are G5. The 78-residue stretch at 217–294 (LREELPYAVA…FLGLEVIVIP (78 aa)) folds into the KH type-2 domain.

This sequence belongs to the TRAFAC class TrmE-Era-EngA-EngB-Septin-like GTPase superfamily. Era GTPase family. As to quaternary structure, monomer.

The protein localises to the cytoplasm. It localises to the cell membrane. In terms of biological role, an essential GTPase that binds both GDP and GTP, with rapid nucleotide exchange. Plays a role in 16S rRNA processing and 30S ribosomal subunit biogenesis and possibly also in cell cycle regulation and energy metabolism. In Deinococcus geothermalis (strain DSM 11300 / CIP 105573 / AG-3a), this protein is GTPase Era.